The chain runs to 981 residues: Mineralocorticoid receptor (981 aa).

The modulating stretch occupies residues 1–603; it reads METKGYHSLP…STGSSRPSKI (603 aa). Over residues 234 to 258 the composition is skewed to polar residues; it reads SLTCSPSVENRGSRSHSPTHASNVG. Disordered stretches follow at residues 234-331 and 355-376; these read SLTC…ASTV and AIQD…VPFP. Phosphoserine occurs at positions 250, 259, 283, 287, and 299. Composition is skewed to low complexity over residues 259-300 and 309-327; these read SPLS…VSSP and SVSS…SSPT. Zn(2+)-binding residues include Cys-604, Cys-607, Cys-621, Cys-624, Cys-640, Cys-646, Cys-656, and Cys-659. 2 NR C4-type zinc fingers span residues 604–624 and 640–664; these read CLVC…CGSC and CAGR…LQKC. The nuclear receptor DNA-binding region spans 604-669; it reads CLVCGDEASG…RLQKCLQAGM (66 aa). Positions 670 to 722 are hinge; it reads NLGARKSKKLGKLKGLHEEQPQQPPPPPPQSPEEGTTYIAPTKEPSVNSALVP. Residues 684–710 form a disordered region; it reads GLHEEQPQQPPPPPPQSPEEGTTYIAP. Over residues 691-700 the composition is skewed to pro residues; sequence QQPPPPPPQS. The NR LBD domain occupies 723–961; sequence QLTSITHALT…EFPAMLVEII (239 aa). 21-hydroxyprogesterone-binding residues include Asn-767 and Gln-773. 2 residues coordinate aldosterone: Asn-767 and Gln-773. Residues Asn-767 and Gln-773 each coordinate progesterone. The important for coactivator binding stretch occupies residues 779 to 782; sequence KWAK. 21-hydroxyprogesterone-binding residues include Arg-814 and Thr-942. Aldosterone contacts are provided by Arg-814 and Thr-942. The progesterone site is built by Arg-814 and Thr-942.

The protein belongs to the nuclear hormone receptor family. NR3 subfamily. Heteromultimeric cytoplasmic complex with HSP90, HSP70, and FKBP4, in the absence of ligand. After ligand binding, it translocates to the nucleus and binds to DNA as a homodimer and as a heterodimer with NR3C1. Binds the coactivator NCOA2. May interact with HSD11B2 in the absence of ligand. Binds the coactivators NCOA1, TIF1 and NRIP1. In terms of processing, phosphorylated. Detected in liver, brain, heart, kidney, colon, aorta, hippocampus, hypothalamus and adrenal fasciculata.

The protein localises to the cytoplasm. The protein resides in the nucleus. It is found in the endoplasmic reticulum membrane. In terms of biological role, receptor for both mineralocorticoids (MC) such as aldosterone and glucocorticoids (GC) such as corticosterone or cortisol. Binds to mineralocorticoid response elements (MRE) and transactivates target genes. The effect of MC is to increase ion and water transport and thus raise extracellular fluid volume and blood pressure and lower potassium levels. This chain is Mineralocorticoid receptor (Nr3c2), found in Rattus norvegicus (Rat).